We begin with the raw amino-acid sequence, 183 residues long: Negative modulator of initiation of replication (183 aa).

The tract at residues 90–91 is interaction with DNA; that stretch reads AV.

This sequence belongs to the SeqA family. As to quaternary structure, homodimer. Polymerizes to form helical filaments.

Its subcellular location is the cytoplasm. Functionally, negative regulator of replication initiation, which contributes to regulation of DNA replication and ensures that replication initiation occurs exactly once per chromosome per cell cycle. Binds to pairs of hemimethylated GATC sequences in the oriC region, thus preventing assembly of replication proteins and re-initiation at newly replicated origins. Repression is relieved when the region becomes fully methylated. The polypeptide is Negative modulator of initiation of replication (Shewanella oneidensis (strain ATCC 700550 / JCM 31522 / CIP 106686 / LMG 19005 / NCIMB 14063 / MR-1)).